The sequence spans 888 residues: Patched domain-containing protein 1 (888 aa).

Residues phenylalanine 20–glycine 40 form a helical membrane-spanning segment. 3 N-linked (GlcNAc...) asparagine glycosylation sites follow: asparagine 77, asparagine 133, and asparagine 167. An SSD domain is found at serine 268 to phenylalanine 427. The next 2 membrane-spanning stretches (helical) occupy residues valine 273–valine 293 and tryptophan 298–isoleucine 318. N-linked (GlcNAc...) asparagine glycans are attached at residues asparagine 319 and asparagine 326. 4 helical membrane passes run threonine 328–leucine 348, leucine 373–phenylalanine 393, cysteine 407–phenylalanine 427, and proline 502–valine 522. Asparagine 568, asparagine 599, and asparagine 608 each carry an N-linked (GlcNAc...) asparagine glycan. 2 helical membrane-spanning segments follow: residues alanine 707–isoleucine 727 and valine 738–isoleucine 758. An N-linked (GlcNAc...) asparagine glycan is attached at asparagine 762. The chain crosses the membrane as a helical span at residues glycine 795–valine 815. Residue asparagine 818 is glycosylated (N-linked (GlcNAc...) asparagine). A helical membrane pass occupies residues cysteine 826–leucine 846.

The protein belongs to the patched family. Broadly expressed in the brain. Selectively expressed in the thalamic reticular nucleus (TRN) in early development and continues to be enriched in this structure throughout adult life.

The protein resides in the cell membrane. The protein localises to the cell projection. Its subcellular location is the dendritic spine. Functionally, required for the development and function of the thalamic reticular nucleus (TRN), a part of the thalamus that is critical for thalamocortical transmission, generation of sleep rhythms, sensorimotor processing and attention. Can bind cholesterol in vitro. This chain is Patched domain-containing protein 1, found in Mus musculus (Mouse).